A 114-amino-acid polypeptide reads, in one-letter code: Probable 4-amino-4-deoxy-L-arabinose-phosphoundecaprenol flippase subunit ArnE (114 aa).

One can recognise an EamA domain in the interval 39-112; the sequence is RSPWLWLALF…VIGGVALLGQ (74 aa). The next 3 helical transmembrane spans lie at 41 to 61, 64 to 84, and 91 to 111; these read PWLWLALFALGSGLLVWLLVL, LPVSVAYPMLSLNFVIITLIA, and PVDVQHWFGVLLVIGGVALLG.

The protein belongs to the ArnE family. As to quaternary structure, heterodimer of ArnE and ArnF.

The protein localises to the cell inner membrane. Its pathway is bacterial outer membrane biogenesis; lipopolysaccharide biosynthesis. Functionally, translocates 4-amino-4-deoxy-L-arabinose-phosphoundecaprenol (alpha-L-Ara4N-phosphoundecaprenol) from the cytoplasmic to the periplasmic side of the inner membrane. The chain is Probable 4-amino-4-deoxy-L-arabinose-phosphoundecaprenol flippase subunit ArnE from Pseudomonas fluorescens (strain Pf0-1).